We begin with the raw amino-acid sequence, 74 residues long: ATP synthase subunit 9, mitochondrial (74 aa).

2 consecutive transmembrane segments (helical) span residues 8-28 (IGAG…GNVF) and 50-70 (ILGF…AFLI).

Belongs to the ATPase C chain family. In terms of assembly, F-type ATPases have 2 components, CF(1) - the catalytic core - and CF(0) - the membrane proton channel. CF(1) has five subunits: alpha(3), beta(3), gamma(1), delta(1), epsilon(1). CF(0) has three main subunits: a, b and c.

The protein resides in the mitochondrion membrane. Functionally, this protein is one of the chains of the nonenzymatic membrane component (F0) of mitochondrial ATPase. The protein is ATP synthase subunit 9, mitochondrial (ATP9) of Triticum aestivum (Wheat).